Consider the following 195-residue polypeptide: NAD(P)H-quinone oxidoreductase subunit J, chloroplastic (195 aa).

It belongs to the complex I 30 kDa subunit family. As to quaternary structure, NDH is composed of at least 16 different subunits, 5 of which are encoded in the nucleus.

It localises to the plastid. The protein resides in the chloroplast thylakoid membrane. It catalyses the reaction a plastoquinone + NADH + (n+1) H(+)(in) = a plastoquinol + NAD(+) + n H(+)(out). The catalysed reaction is a plastoquinone + NADPH + (n+1) H(+)(in) = a plastoquinol + NADP(+) + n H(+)(out). NDH shuttles electrons from NAD(P)H:plastoquinone, via FMN and iron-sulfur (Fe-S) centers, to quinones in the photosynthetic chain and possibly in a chloroplast respiratory chain. The immediate electron acceptor for the enzyme in this species is believed to be plastoquinone. Couples the redox reaction to proton translocation, and thus conserves the redox energy in a proton gradient. The chain is NAD(P)H-quinone oxidoreductase subunit J, chloroplastic from Chlorokybus atmophyticus (Soil alga).